The sequence spans 105 residues: TPR repeat-containing protein PA0015 (105 aa).

2 TPR repeats span residues alanine 17–tyrosine 50 and alanine 52–histidine 84.

This Pseudomonas aeruginosa (strain ATCC 15692 / DSM 22644 / CIP 104116 / JCM 14847 / LMG 12228 / 1C / PRS 101 / PAO1) protein is TPR repeat-containing protein PA0015.